A 448-amino-acid polypeptide reads, in one-letter code: Fibulin-5 (448 aa).

The first 23 residues, 1–23 (MPGLKRILTVTILALWLPHPGNA), serve as a signal peptide directing secretion. The 41-residue stretch at 42 to 82 (DIDECRTIPEACRGDMMCVNQNGGYLCIPRTNPVYRGPYSN) folds into the EGF-like 1; calcium-binding domain. 17 disulfides stabilise this stretch: Cys-46-Cys-59, Cys-53-Cys-68, Cys-131-Cys-144, Cys-138-Cys-153, Cys-155-Cys-166, Cys-172-Cys-181, Cys-177-Cys-190, Cys-192-Cys-205, Cys-211-Cys-221, Cys-217-Cys-230, Cys-232-Cys-245, Cys-251-Cys-262, Cys-258-Cys-271, Cys-273-Cys-286, Cys-292-Cys-305, Cys-299-Cys-314, and Cys-320-Cys-332. A Cell attachment site motif is present at residues 54–56 (RGD). Positions 127 to 167 (DVDECATDSHQCNPTQICINTEGGYTCSCTDGYWLLEGQCL) constitute an EGF-like 2; calcium-binding domain. In terms of domain architecture, EGF-like 3; calcium-binding spans 168 to 206 (DIDECRYGYCQQLCANVPGSYSCTCNPGFTLNDDGRSCQ). Residues 207–246 (DVNECETENPCVQTCVNTYGSFICRCDPGYELEEDGIHCS) form the EGF-like 4; calcium-binding domain. Residues 245–448 (CSDMDECSFS…LRIYVSQYPF (204 aa)) form an interaction with LOXL1 region. Residues 247-287 (DMDECSFSEFLCQHECVNQPGSYFCSCPPGYVLLEDNRSCQ) enclose the EGF-like 5; calcium-binding domain. Asn-283 and Asn-296 each carry an N-linked (GlcNAc...) asparagine glycan. An EGF-like 6; calcium-binding domain is found at 288 to 333 (DINECEHRNHTCTPLQTCYNLQGGFKCIDPIVCEEPYLLIGDNRCM).

The protein belongs to the fibulin family. As to quaternary structure, homodimer. Monomer, homodimerizes in presence of Ca(2+). Interacts with ELN. Interacts (via N-terminus) with the integrins ITGAV/ITGB3, ITGAV/ITGB5 and ITGA9/ITGB1. Interacts with FBN1 (via N-terminal domain). Forms a ternary complex with ELN and FBN1. Interacts with EFEMP2 with moderate affinity. Interacts with LOXL1. In terms of processing, N-glycosylated.

The protein localises to the secreted. Its subcellular location is the extracellular space. It localises to the extracellular matrix. Its function is as follows. Essential for elastic fiber formation, is involved in the assembly of continuous elastin (ELN) polymer and promotes the interaction of microfibrils and ELN. Stabilizes and organizes elastic fibers in the skin, lung and vasculature. Promotes adhesion of endothelial cells through interaction of integrins and the RGD motif. Vascular ligand for integrin receptors which may play a role in vascular development and remodeling. May act as an adapter that mediates the interaction between FBN1 and ELN. This chain is Fibulin-5 (Fbln5), found in Rattus norvegicus (Rat).